A 313-amino-acid chain; its full sequence is E3 ubiquitin-protein ligase RNF126 (313 aa).

Position 2 is an N-acetylalanine (Ala-2). Ser-5 carries the post-translational modification Phosphoserine. A required for interaction with BAG6 region spans residues 5 to 100 (SPQPGRYFCH…FEIPTFPPGA (96 aa)). The Zn(2+) site is built by Cys-13, Cys-16, Cys-29, and Cys-32. The segment at 13–32 (CHCCSVEIVPRLPDYICPRC) adopts a C4-type zinc-finger fold. 2 disordered regions span residues 42 to 63 (EETR…QNRQ) and 95 to 128 (TFPP…RQPR). The span at 47-63 (TENGSAPSTAPTDQNRQ) shows a compositional bias: polar residues. The segment covering 103–116 (DDGRDPESRREREH) has biased composition (basic and acidic residues). Residues 117 to 128 (QSRHRYGARQPR) are compositionally biased toward basic residues. The tract at residues 202 to 306 (TGPPPADKEK…SSSSSSSPSN (105 aa)) is sufficient for interaction with AICDA. Residues 231 to 272 (CPVCKEDYALGESVRQLPCNHLFHDSCIVPWLEQHDSCPVCR) form an RING-type zinc finger. Residues 279–313 (NTATNPPGLTGVGFSSSSSSSSSSSPSNENATSNS) form a disordered region. The segment covering 293–313 (SSSSSSSSSSSPSNENATSNS) has biased composition (low complexity).

As to quaternary structure, interacts with CCDC50, EGFR, FLT3 and SCAMP3. Interacts with BAG6 (via ubiquitin-like domain); required for BAG6-dependent ubiquitination of proteins mislocalized to the cytosol. Interacts with CDKN1A. Interacts with AICDA. Post-translationally, ubiquitinated. May undergo autoubiquitination. Detected in B-cells (at protein level).

The protein resides in the cytoplasm. The protein localises to the nucleus. It catalyses the reaction S-ubiquitinyl-[E2 ubiquitin-conjugating enzyme]-L-cysteine + [acceptor protein]-L-lysine = [E2 ubiquitin-conjugating enzyme]-L-cysteine + N(6)-ubiquitinyl-[acceptor protein]-L-lysine.. It participates in protein modification; protein ubiquitination. Its function is as follows. E3 ubiquitin-protein ligase that mediates ubiquitination oF target proteins. Depending on the associated E2 ligase, mediates 'Lys-27'-, 'Lys-29'-, 'Lys-48'- and/or 'Lys-63'-linked polyubiquitination of substrates. Part of a BAG6-dependent quality control process ensuring that proteins of the secretory pathway that are mislocalized to the cytosol are degraded by the proteasome. Probably acts by providing the ubiquitin ligase activity associated with the BAG6 complex and be responsible for ubiquitination of the hydrophobic mislocalized proteins and their targeting to the proteasome. May also play a role in the endosomal recycling of IGF2R, the cation-independent mannose-6-phosphate receptor. May play a role in the endosomal sorting and degradation of several membrane receptors including EGFR, FLT3, MET and CXCR4, by mediating their ubiquitination. By ubiquitinating CDKN1A/p21 and targeting it for degradation, may also promote cell proliferation. May monoubiquitinate AICDA. Acts as a regulator of DNA repair by mediating 'Lys-27'- and 'Lys-29'-linked polyubiquitination of MRE11, thereby promoting the exonuclease activity of MRE11. The sequence is that of E3 ubiquitin-protein ligase RNF126 from Mus musculus (Mouse).